Here is a 152-residue protein sequence, read N- to C-terminus: Probable ribose-5-phosphate isomerase B (152 aa).

10-11 serves as a coordination point for D-ribulose 5-phosphate; the sequence is DH. C69 acts as the Proton acceptor in catalysis. 70–74 lines the D-ribulose 5-phosphate pocket; it reads GTGVG. The active-site Proton donor is H102. Positions 103, 113, 136, and 140 each coordinate D-ribulose 5-phosphate.

It belongs to the LacAB/RpiB family. Homodimer.

The catalysed reaction is aldehydo-D-ribose 5-phosphate = D-ribulose 5-phosphate. The protein operates within carbohydrate degradation; pentose phosphate pathway; D-ribose 5-phosphate from D-ribulose 5-phosphate (non-oxidative stage): step 1/1. Its function is as follows. Catalyzes the interconversion of ribulose-5-P and ribose-5-P. The polypeptide is Probable ribose-5-phosphate isomerase B (Mycoplasma genitalium (strain ATCC 33530 / DSM 19775 / NCTC 10195 / G37) (Mycoplasmoides genitalium)).